A 182-amino-acid chain; its full sequence is Adenine phosphoribosyltransferase (182 aa).

This sequence belongs to the purine/pyrimidine phosphoribosyltransferase family. In terms of assembly, homodimer.

It localises to the cytoplasm. It carries out the reaction AMP + diphosphate = 5-phospho-alpha-D-ribose 1-diphosphate + adenine. It functions in the pathway purine metabolism; AMP biosynthesis via salvage pathway; AMP from adenine: step 1/1. Functionally, catalyzes a salvage reaction resulting in the formation of AMP, that is energically less costly than de novo synthesis. The chain is Adenine phosphoribosyltransferase from Stutzerimonas stutzeri (Pseudomonas stutzeri).